The following is a 284-amino-acid chain: Polyamine aminopropyltransferase (284 aa).

In terms of domain architecture, PABS spans 2–237; it reads ELWYTEEQTQ…GYWLFGFASK (236 aa). Glutamine 31 contacts S-methyl-5'-thioadenosine. Histidine 62 and aspartate 86 together coordinate spermidine. Residues glutamate 106 and 137–138 contribute to the S-methyl-5'-thioadenosine site; that span reads DG. Aspartate 155 functions as the Proton acceptor in the catalytic mechanism. 155-158 provides a ligand contact to spermidine; that stretch reads DSTD. S-methyl-5'-thioadenosine is bound at residue proline 162.

This sequence belongs to the spermidine/spermine synthase family. Homodimer or homotetramer.

It is found in the cytoplasm. The enzyme catalyses S-adenosyl 3-(methylsulfanyl)propylamine + putrescine = S-methyl-5'-thioadenosine + spermidine + H(+). Its pathway is amine and polyamine biosynthesis; spermidine biosynthesis; spermidine from putrescine: step 1/1. Its function is as follows. Catalyzes the irreversible transfer of a propylamine group from the amino donor S-adenosylmethioninamine (decarboxy-AdoMet) to putrescine (1,4-diaminobutane) to yield spermidine. The polypeptide is Polyamine aminopropyltransferase (Alkaliphilus metalliredigens (strain QYMF)).